A 126-amino-acid chain; its full sequence is Holo-[acyl-carrier-protein] synthase (126 aa).

Residues Asp8 and Glu50 each contribute to the Mg(2+) site.

It belongs to the P-Pant transferase superfamily. AcpS family. It depends on Mg(2+) as a cofactor.

The protein localises to the cytoplasm. The catalysed reaction is apo-[ACP] + CoA = holo-[ACP] + adenosine 3',5'-bisphosphate + H(+). Its function is as follows. Transfers the 4'-phosphopantetheine moiety from coenzyme A to a Ser of acyl-carrier-protein. The sequence is that of Holo-[acyl-carrier-protein] synthase from Micrococcus luteus (strain ATCC 4698 / DSM 20030 / JCM 1464 / CCM 169 / CCUG 5858 / IAM 1056 / NBRC 3333 / NCIMB 9278 / NCTC 2665 / VKM Ac-2230) (Micrococcus lysodeikticus).